The chain runs to 285 residues: 3',5'-nucleoside bisphosphate phosphatase (285 aa).

Positions 7, 9, 14, 39, 64, and 75 each coordinate Mn(2+). Substrate is bound by residues Asp14 and His39. Residues 99-102 and 134-135 contribute to the substrate site; these read RLER and RT. 3 residues coordinate Mn(2+): His191, Asp248, and His250. His250 is a substrate binding site.

The protein belongs to the PHP family. As to quaternary structure, monomer. Mn(2+) serves as cofactor.

The catalysed reaction is a ribonucleoside 3',5'-bisphosphate + H2O = a ribonucleoside 5'-phosphate + phosphate. Hydrolyzes 3',5'-bisphosphonucleosides (pGp, pCp, pUp, and pIp) to nucleoside 5'-phosphate and orthophosphate. Has similar catalytic efficiencies with all the bases. Also shows activity with ribonucleoside 2'-deoxyribonucleoside 3',5'-bisphosphates. Does not show activity with nucleoside 2',5'-bisphosphates. This Chromobacterium violaceum (strain ATCC 12472 / DSM 30191 / JCM 1249 / CCUG 213 / NBRC 12614 / NCIMB 9131 / NCTC 9757 / MK) protein is 3',5'-nucleoside bisphosphate phosphatase.